The sequence spans 295 residues: Probable peptidyl-prolyl cis-trans isomerase B (295 aa).

Disordered regions lie at residues 105–128 (SADK…PATV) and 274–295 (IASG…LRLD). The PPIase cyclophilin-type domain occupies 126–294 (ATVSASMATN…TEVTIESLRL (169 aa)).

This sequence belongs to the cyclophilin-type PPIase family.

It carries out the reaction [protein]-peptidylproline (omega=180) = [protein]-peptidylproline (omega=0). PPIases accelerate the folding of proteins. It catalyzes the cis-trans isomerization of proline imidic peptide bonds in oligopeptides. The chain is Probable peptidyl-prolyl cis-trans isomerase B (ppiB) from Mycobacterium leprae (strain TN).